The following is a 362-amino-acid chain: MSLQSIKYQRGSLEILDQLLLPVVSKYLTVRGVEDGWKVINKMQVRGAPAIAIVGCLSLAVEIYPEEFGSKKSLRQEIEGKLNYLVSARPTAVNMKISADELITLANELTKDDNVTVEDMKQRFLNATEAMLEKDIADNRAIGANGAKAILEHVAESASAAAAGPVRVLTHCNTGSLATAGYGTALGVVRHLSELGKLEHVYCTETRPYNQGARLTAYELVHEKLPATLVLDSMVAALLRVKNVAAVVVGADRVAANGDTANKIGTYQIAVVAKHHGVPFYVAAPLTSVDLQIPSGDHIIIEVRPDREMTHVGEHRIAAPGINCWNPAFDVTPASLVTGIITEHGVFKPSALKAEITKLLDL.

D252 acts as the Proton donor in catalysis.

This sequence belongs to the eIF-2B alpha/beta/delta subunits family. MtnA subfamily.

The protein resides in the cytoplasm. It localises to the nucleus. It catalyses the reaction 5-(methylsulfanyl)-alpha-D-ribose 1-phosphate = 5-(methylsulfanyl)-D-ribulose 1-phosphate. It participates in amino-acid biosynthesis; L-methionine biosynthesis via salvage pathway; L-methionine from S-methyl-5-thio-alpha-D-ribose 1-phosphate: step 1/6. Catalyzes the interconversion of methylthioribose-1-phosphate (MTR-1-P) into methylthioribulose-1-phosphate (MTRu-1-P). This is Methylthioribose-1-phosphate isomerase from Drosophila virilis (Fruit fly).